The sequence spans 943 residues: MQDSVMQRMWNSAHLSGGNAAYVEELYELYLHDPNAVPEEWRTYFEKLPAEAGTSTDVPHAPVRDQFVLLAKNQRRAQPVATSSVSTEHEKKQVEVLRLIQAYRTRGHQASQLDPLGLWQRTAPSDLSITHYGLTNADLDTPFRTGELYIGKEEATLREILQALQETYCRTIGAEFTHIVDSEQRNWFAQRLESVRGRPVYSKEAKSHLLERLSAAEGLEKYLGTKYPGTKRFGLEGGESLVPVVDEIIQRSGSYGTKEVVIGMAHRGRLNLLVNALGKNPRDLFDEFEGKHLVELGSGDVKYHQGFSSNVMTSGGEVHLAMAFNPSHLEIVSPVVEGSVRARQDRRVDATGEKVVPISIHGDSAFAGQGVVMETFQMSQIRGYKTGGTIHIVVNNQVGFTTSNPVDTRSTEYCTDPAKMIQAPVLHVNGDDPEAVLFVTQLAVDYRMQFKRDVVIDLVCYRRRGHNEADEPSGTQPLMYQKIAKQPTTRELYADALVKEGSLSQEEVQAKVDEYRTALDNGQHVLKSLVKEPNTELFVDWTPYLGHAWTARHDTSFELKTLQELNAKLLQIPEGFVVQRQVAKILEDRGRMGVGAMPINWGCAETLAYATLLKEGHPVRITGQDVGRGTFSHRHAALHNQKDASRYIPLQNLYEGQPKFELYDSFLSEEAVLAFEYGYATTTPNALVIWEASSGDFANGAQVVIDQFISSGETKWGALCGLTMLLPHGYEGQGPEHSSARLERYLQLCAEQNIQVCVPTTPAQVYHMLRRQVIRPLRKPLVALTPKSLLRHKSAISTLEDLALGSFHPVLPEVDSLDPKKVERLVLCSGKVYYDLLDKRHAEGREDIAIVRIEQLYPFPEEELAEVMAPYTNLKHVVWCQEEPMNQGAWYCSQHHMRRVASAHKKELFLQYAGREASAAPACGYASMHAEQQEKLLQDAFTV.

It belongs to the alpha-ketoglutarate dehydrogenase family. Homodimer. Part of the 2-oxoglutarate dehydrogenase (OGDH) complex composed of E1 (2-oxoglutarate dehydrogenase), E2 (dihydrolipoamide succinyltransferase) and E3 (dihydrolipoamide dehydrogenase); the complex contains multiple copies of the three enzymatic components (E1, E2 and E3). It depends on thiamine diphosphate as a cofactor.

The catalysed reaction is N(6)-[(R)-lipoyl]-L-lysyl-[protein] + 2-oxoglutarate + H(+) = N(6)-[(R)-S(8)-succinyldihydrolipoyl]-L-lysyl-[protein] + CO2. Functionally, E1 component of the 2-oxoglutarate dehydrogenase (OGDH) complex which catalyzes the decarboxylation of 2-oxoglutarate, the first step in the conversion of 2-oxoglutarate to succinyl-CoA and CO(2). The chain is 2-oxoglutarate dehydrogenase E1 component (sucA) from Azotobacter vinelandii.